Here is a 308-residue protein sequence, read N- to C-terminus: SAP30-binding protein (308 aa).

A disordered region spans residues 15 to 101 (AEYSDPESDG…EAEKRDPQEL (87 aa)). Serine 18, serine 22, serine 43, and serine 52 each carry phosphoserine. Over residues 57 to 78 (DEDGYEEEEDENSKQSEDDDSE) the composition is skewed to acidic residues. Residues 79–99 (TEKPEADDPKDNTEAEKRDPQ) show a composition bias toward basic and acidic residues. Lysine 95 participates in a covalent cross-link: Glycyl lysine isopeptide (Lys-Gly) (interchain with G-Cter in SUMO2). Serine 113 is modified (phosphoserine). Glycyl lysine isopeptide (Lys-Gly) (interchain with G-Cter in SUMO2) cross-links involve residues lysine 220, lysine 304, and lysine 305.

It belongs to the HCNGP family. Interacts with histone deacetylase complex subunit SAP30.

The protein resides in the nucleus. Plays a role in transcriptional repression by promoting histone deacetylase activity, leading to deacetylation of histone H3. May be involved in the regulation of beta-2-microglobulin genes. The polypeptide is SAP30-binding protein (Sap30bp) (Mus musculus (Mouse)).